A 567-amino-acid chain; its full sequence is Urease subunit alpha (567 aa).

One can recognise a Urease domain in the interval 128 to 567 (GGIDPHIHFI…LPLAQLYHLF (440 aa)). His133, His135, and Lys216 together coordinate Ni(2+). At Lys216 the chain carries N6-carboxylysine. A substrate-binding site is contributed by His218. Residues His245 and His271 each coordinate Ni(2+). His319 acts as the Proton donor in catalysis. Position 359 (Asp359) interacts with Ni(2+).

The protein belongs to the metallo-dependent hydrolases superfamily. Urease alpha subunit family. Heterotrimer of UreA (gamma), UreB (beta) and UreC (alpha) subunits. Three heterotrimers associate to form the active enzyme. The cofactor is Ni cation. In terms of processing, carboxylation allows a single lysine to coordinate two nickel ions.

It localises to the cytoplasm. The enzyme catalyses urea + 2 H2O + H(+) = hydrogencarbonate + 2 NH4(+). Its pathway is nitrogen metabolism; urea degradation; CO(2) and NH(3) from urea (urease route): step 1/1. This Marinobacter nauticus (strain ATCC 700491 / DSM 11845 / VT8) (Marinobacter aquaeolei) protein is Urease subunit alpha.